Consider the following 806-residue polypeptide: Sperm head and tail associated protein (806 aa).

Disordered regions lie at residues 1–36 (MNSS…PSSC), 257–329 (TPAS…MSGS), 428–496 (LNNQ…CPQP), and 707–806 (SQIN…SKKK). The span at 13 to 27 (APSTSPQADCPNNYS) shows a compositional bias: polar residues. Positions 277–290 (PPLSSASSPPSGNP) are enriched in low complexity. Over residues 320-329 (LSSQAGMSGS) the composition is skewed to polar residues. The segment at 521-806 (KEPPPETAVL…QIKSPHSKKK (286 aa)) is interaction with CRISP2. 2 stretches are compositionally biased toward low complexity: residues 710–723 (NHQN…KNSS) and 733–754 (RRGA…SSTQ). The segment covering 773-788 (QSQSPADGKIESQSKS) has biased composition (polar residues).

In terms of assembly, interacts with CRISP2. As to expression, isoforms 3 and 4 are expressed in testis (at protein level).

It localises to the cytoplasm. Plays a role during spermatogenesis. In Mus musculus (Mouse), this protein is Sperm head and tail associated protein (Nsun4).